Here is a 275-residue protein sequence, read N- to C-terminus: Intercellular adhesion molecule 2 (275 aa).

Positions 1 to 24 are cleaved as a signal peptide; the sequence is MSSFSYRTLTVALFALICCPGSDE. Residues 25-223 are Extracellular-facing; that stretch reads KVFEVHVRPK…EIYEPVSDSQ (199 aa). Residues 41-98 enclose the Ig-like C2-type 1 domain; the sequence is KGSLKVNCSTTCNQPEVGGLETSLDKILLDEQAQWKHYLVSNISHDTVLQCHFTCSGK. Residues N47, N82, N105, N153, N176, and N187 are each glycosylated (N-linked (GlcNAc...) asparagine). Cystine bridges form between C48–C91 and C52–C95. One can recognise an Ig-like C2-type 2 domain in the interval 127 to 197; it reads GKSFTIECRV…FSCLAVLDLM (71 aa). A disulfide bridge links C134 with C190. Residues 224–248 form a helical membrane-spanning segment; the sequence is MVIIVTVVSVLLSLFVTSVLLCFIF. Residues 249 to 275 are Cytoplasmic-facing; the sequence is GQHLRQQRMGTYGVRAAWRRLPQAFRP. The segment at 251–275 is required for interaction with EZR, MSN and RDX and co-localization to microvilli; that stretch reads HLRQQRMGTYGVRAAWRRLPQAFRP.

The protein belongs to the immunoglobulin superfamily. ICAM family. In terms of assembly, interacts with RDX, EZR and MSN.

The protein localises to the membrane. It is found in the cell projection. The protein resides in the microvillus. Its function is as follows. ICAM proteins are ligands for the leukocyte adhesion protein LFA-1 (integrin alpha-L/beta-2). ICAM2 may play a role in lymphocyte recirculation by blocking LFA-1-dependent cell adhesion. It mediates adhesive interactions important for antigen-specific immune response, NK-cell mediated clearance, lymphocyte recirculation, and other cellular interactions important for immune response and surveillance. This Pan troglodytes (Chimpanzee) protein is Intercellular adhesion molecule 2 (ICAM2).